We begin with the raw amino-acid sequence, 475 residues long: Ribulose bisphosphate carboxylase large chain (475 aa).

Positions 1–2 (MS) are excised as a propeptide. Position 3 is an N-acetylproline (Pro3). The residue at position 14 (Lys14) is an N6,N6,N6-trimethyllysine. Asn123 and Thr173 together coordinate substrate. Lys175 serves as the catalytic Proton acceptor. Lys177 is a binding site for substrate. Residues Lys201, Asp203, and Glu204 each contribute to the Mg(2+) site. Position 201 is an N6-carboxylysine (Lys201). His294 (proton acceptor) is an active-site residue. Residues Arg295, His327, and Ser379 each coordinate substrate.

The protein belongs to the RuBisCO large chain family. Type I subfamily. Heterohexadecamer of 8 large chains and 8 small chains. Requires Mg(2+) as cofactor.

It localises to the plastid. The protein resides in the chloroplast. The catalysed reaction is 2 (2R)-3-phosphoglycerate + 2 H(+) = D-ribulose 1,5-bisphosphate + CO2 + H2O. The enzyme catalyses D-ribulose 1,5-bisphosphate + O2 = 2-phosphoglycolate + (2R)-3-phosphoglycerate + 2 H(+). RuBisCO catalyzes two reactions: the carboxylation of D-ribulose 1,5-bisphosphate, the primary event in carbon dioxide fixation, as well as the oxidative fragmentation of the pentose substrate in the photorespiration process. Both reactions occur simultaneously and in competition at the same active site. The polypeptide is Ribulose bisphosphate carboxylase large chain (Bazzania trilobata (Greater whipwort)).